The chain runs to 318 residues: Ribonuclease Z (318 aa).

Zn(2+)-binding residues include histidine 62, histidine 64, aspartate 66, histidine 67, histidine 139, aspartate 210, and histidine 268. Aspartate 66 serves as the catalytic Proton acceptor.

It belongs to the RNase Z family. Homodimer. Zn(2+) serves as cofactor.

The enzyme catalyses Endonucleolytic cleavage of RNA, removing extra 3' nucleotides from tRNA precursor, generating 3' termini of tRNAs. A 3'-hydroxy group is left at the tRNA terminus and a 5'-phosphoryl group is left at the trailer molecule.. Zinc phosphodiesterase, which displays some tRNA 3'-processing endonuclease activity. Probably involved in tRNA maturation, by removing a 3'-trailer from precursor tRNA. The sequence is that of Ribonuclease Z from Microcystis aeruginosa (strain NIES-843 / IAM M-2473).